Consider the following 84-residue polypeptide: Tetrahydromethanopterin S-methyltransferase subunit G (84 aa).

Residues 50-70 form a helical membrane-spanning segment; the sequence is IGILYGLVIGIILSYILPALI.

This sequence belongs to the MtrG family. The complex is composed of 8 subunits; MtrA, MtrB, MtrC, MtrD, MtrE, MtrF, MtrG and MtrH.

It localises to the cell membrane. The catalysed reaction is 5-methyl-5,6,7,8-tetrahydromethanopterin + coenzyme M + 2 Na(+)(in) = 5,6,7,8-tetrahydromethanopterin + methyl-coenzyme M + 2 Na(+)(out). It functions in the pathway one-carbon metabolism; methanogenesis from CO(2); methyl-coenzyme M from 5,10-methylene-5,6,7,8-tetrahydromethanopterin: step 2/2. Functionally, part of a complex that catalyzes the formation of methyl-coenzyme M and tetrahydromethanopterin from coenzyme M and methyl-tetrahydromethanopterin. This is an energy-conserving, sodium-ion translocating step. The chain is Tetrahydromethanopterin S-methyltransferase subunit G from Methanocaldococcus jannaschii (strain ATCC 43067 / DSM 2661 / JAL-1 / JCM 10045 / NBRC 100440) (Methanococcus jannaschii).